Here is a 24-residue protein sequence, read N- to C-terminus: Pseudin-2 (24 aa).

As to expression, expressed by the skin glands.

The protein localises to the secreted. Its function is as follows. Antimicrobial peptide with activity against fungus (C.albicans) and Gram-positive and Gram-negative bacteria (S.aureus and E.coli). Also has low hemolytic activity against human erythrocytes. The protein is Pseudin-2 of Pseudis paradoxa (Paradoxical frog).